A 238-amino-acid polypeptide reads, in one-letter code: uncharacterized protein (238 aa).

The N-terminal stretch at 1–20 (MNNVKLLIAGSAFFAMSAQA) is a signal peptide.

The protein to E.coli GltF.

This is an uncharacterized protein from Escherichia coli (strain K12).